Here is a 318-residue protein sequence, read N- to C-terminus: Transaldolase (318 aa).

The active-site Schiff-base intermediate with substrate is the K132.

It belongs to the transaldolase family. Type 1 subfamily. As to quaternary structure, homodimer.

It localises to the cytoplasm. It catalyses the reaction D-sedoheptulose 7-phosphate + D-glyceraldehyde 3-phosphate = D-erythrose 4-phosphate + beta-D-fructose 6-phosphate. It participates in carbohydrate degradation; pentose phosphate pathway; D-glyceraldehyde 3-phosphate and beta-D-fructose 6-phosphate from D-ribose 5-phosphate and D-xylulose 5-phosphate (non-oxidative stage): step 2/3. Its function is as follows. Transaldolase is important for the balance of metabolites in the pentose-phosphate pathway. In Shewanella oneidensis (strain ATCC 700550 / JCM 31522 / CIP 106686 / LMG 19005 / NCIMB 14063 / MR-1), this protein is Transaldolase.